Reading from the N-terminus, the 494-residue chain is Alpha-amylase A (494 aa).

The first 18 residues, 1–18 (MFLAKSLVCLALLAVANA), serve as a signal peptide directing secretion. Position 19 is a pyrrolidone carboxylic acid (Gln19). Cys46 and Cys102 are oxidised to a cystine. Ca(2+) is bound by residues Asn116, Arg165, and Asp174. An intrachain disulfide couples Cys153 to Cys167. Arg202 contributes to the chloride binding site. The Nucleophile role is filled by Asp204. Residue His208 coordinates Ca(2+). The active-site Proton donor is Glu241. Chloride-binding residues include Asn304 and Arg343. 2 cysteine pairs are disulfide-bonded: Cys376/Cys382 and Cys448/Cys460.

It belongs to the glycosyl hydrolase 13 family. In terms of assembly, monomer. Ca(2+) serves as cofactor. It depends on chloride as a cofactor.

The enzyme catalyses Endohydrolysis of (1-&gt;4)-alpha-D-glucosidic linkages in polysaccharides containing three or more (1-&gt;4)-alpha-linked D-glucose units.. This chain is Alpha-amylase A (Amy-d), found in Drosophila mauritiana (Fruit fly).